The chain runs to 147 residues: Thyrotropin subunit beta (147 aa).

A signal peptide spans 1–20; that stretch reads MRVVLLASGVLCLLAGQVLS. Cystine bridges form between Cys-22–Cys-72, Cys-36–Cys-87, Cys-39–Cys-126, Cys-47–Cys-103, Cys-51–Cys-105, and Cys-108–Cys-115. N-linked (GlcNAc...) asparagine glycosylation is present at Asn-43.

The protein belongs to the glycoprotein hormones subunit beta family. In terms of assembly, heterodimer of a common alpha chain and a unique beta chain which confers biological specificity to thyrotropin, lutropin, follitropin and gonadotropin.

The protein resides in the secreted. Its function is as follows. Indispensable for the control of thyroid structure and metabolism. May play some role in the biological processes of the immature fishes. This chain is Thyrotropin subunit beta (tshb), found in Anguilla japonica (Japanese eel).